Consider the following 174-residue polypeptide: ATP-dependent protease subunit HslV (174 aa).

Residue Thr-2 is part of the active site. Residues Ala-157, Cys-160, and Thr-163 each coordinate Na(+).

The protein belongs to the peptidase T1B family. HslV subfamily. A double ring-shaped homohexamer of HslV is capped on each side by a ring-shaped HslU homohexamer. The assembly of the HslU/HslV complex is dependent on binding of ATP.

It is found in the cytoplasm. The catalysed reaction is ATP-dependent cleavage of peptide bonds with broad specificity.. Its activity is regulated as follows. Allosterically activated by HslU binding. Its function is as follows. Protease subunit of a proteasome-like degradation complex believed to be a general protein degrading machinery. This Shewanella baltica (strain OS195) protein is ATP-dependent protease subunit HslV.